Reading from the N-terminus, the 408-residue chain is 2,3-bisphosphoglycerate-independent phosphoglycerate mutase 1 (408 aa).

It belongs to the BPG-independent phosphoglycerate mutase family. A-PGAM subfamily. In terms of assembly, monomer. The cofactor is Mn(2+).

The enzyme catalyses (2R)-2-phosphoglycerate = (2R)-3-phosphoglycerate. Its pathway is carbohydrate degradation; glycolysis; pyruvate from D-glyceraldehyde 3-phosphate: step 3/5. Catalyzes the interconversion of 2-phosphoglycerate and 3-phosphoglycerate. This chain is 2,3-bisphosphoglycerate-independent phosphoglycerate mutase 1 (apgM1), found in Archaeoglobus fulgidus (strain ATCC 49558 / DSM 4304 / JCM 9628 / NBRC 100126 / VC-16).